The chain runs to 159 residues: NAD(P)H-quinone oxidoreductase subunit I, chloroplastic (159 aa).

4Fe-4S ferredoxin-type domains are found at residues Gly-55–Asn-84 and Lys-95–Glu-124. [4Fe-4S] cluster-binding residues include Cys-64, Cys-67, Cys-70, Cys-74, Cys-104, Cys-107, Cys-110, and Cys-114.

This sequence belongs to the complex I 23 kDa subunit family. As to quaternary structure, NDH is composed of at least 16 different subunits, 5 of which are encoded in the nucleus. [4Fe-4S] cluster is required as a cofactor.

The protein localises to the plastid. It is found in the chloroplast thylakoid membrane. The enzyme catalyses a plastoquinone + NADH + (n+1) H(+)(in) = a plastoquinol + NAD(+) + n H(+)(out). The catalysed reaction is a plastoquinone + NADPH + (n+1) H(+)(in) = a plastoquinol + NADP(+) + n H(+)(out). Its function is as follows. NDH shuttles electrons from NAD(P)H:plastoquinone, via FMN and iron-sulfur (Fe-S) centers, to quinones in the photosynthetic chain and possibly in a chloroplast respiratory chain. The immediate electron acceptor for the enzyme in this species is believed to be plastoquinone. Couples the redox reaction to proton translocation, and thus conserves the redox energy in a proton gradient. The polypeptide is NAD(P)H-quinone oxidoreductase subunit I, chloroplastic (Chara vulgaris (Common stonewort)).